A 333-amino-acid chain; its full sequence is Phosphoribosylformylglycinamidine cyclo-ligase (333 aa).

This sequence belongs to the AIR synthase family.

It localises to the cytoplasm. It catalyses the reaction 2-formamido-N(1)-(5-O-phospho-beta-D-ribosyl)acetamidine + ATP = 5-amino-1-(5-phospho-beta-D-ribosyl)imidazole + ADP + phosphate + H(+). It functions in the pathway purine metabolism; IMP biosynthesis via de novo pathway; 5-amino-1-(5-phospho-D-ribosyl)imidazole from N(2)-formyl-N(1)-(5-phospho-D-ribosyl)glycinamide: step 2/2. The polypeptide is Phosphoribosylformylglycinamidine cyclo-ligase (Methanosarcina mazei (strain ATCC BAA-159 / DSM 3647 / Goe1 / Go1 / JCM 11833 / OCM 88) (Methanosarcina frisia)).